Here is a 165-residue protein sequence, read N- to C-terminus: Chorismate pyruvate-lyase (165 aa).

Substrate contacts are provided by Met35, Arg77, Leu115, and Glu156.

Belongs to the UbiC family. In terms of assembly, monomer.

The protein localises to the cytoplasm. The enzyme catalyses chorismate = 4-hydroxybenzoate + pyruvate. The protein operates within cofactor biosynthesis; ubiquinone biosynthesis. Its function is as follows. Removes the pyruvyl group from chorismate, with concomitant aromatization of the ring, to provide 4-hydroxybenzoate (4HB) for the ubiquinone pathway. The chain is Chorismate pyruvate-lyase from Citrobacter koseri (strain ATCC BAA-895 / CDC 4225-83 / SGSC4696).